The following is a 270-amino-acid chain: Formamidopyrimidine-DNA glycosylase (270 aa).

P2 functions as the Schiff-base intermediate with DNA in the catalytic mechanism. The active-site Proton donor is the E3. K58 acts as the Proton donor; for beta-elimination activity in catalysis. DNA is bound by residues H91, R110, and R151. An FPG-type zinc finger spans residues 236-270; that stretch reads FVYGRGGQPCKVCGTALREVKLGQRASVYCPRCQR. Catalysis depends on R260, which acts as the Proton donor; for delta-elimination activity.

The protein belongs to the FPG family. As to quaternary structure, monomer. Requires Zn(2+) as cofactor.

It carries out the reaction Hydrolysis of DNA containing ring-opened 7-methylguanine residues, releasing 2,6-diamino-4-hydroxy-5-(N-methyl)formamidopyrimidine.. The catalysed reaction is 2'-deoxyribonucleotide-(2'-deoxyribose 5'-phosphate)-2'-deoxyribonucleotide-DNA = a 3'-end 2'-deoxyribonucleotide-(2,3-dehydro-2,3-deoxyribose 5'-phosphate)-DNA + a 5'-end 5'-phospho-2'-deoxyribonucleoside-DNA + H(+). Functionally, involved in base excision repair of DNA damaged by oxidation or by mutagenic agents. Acts as a DNA glycosylase that recognizes and removes damaged bases. Has a preference for oxidized purines, such as 7,8-dihydro-8-oxoguanine (8-oxoG). Has AP (apurinic/apyrimidinic) lyase activity and introduces nicks in the DNA strand. Cleaves the DNA backbone by beta-delta elimination to generate a single-strand break at the site of the removed base with both 3'- and 5'-phosphates. In Pseudomonas putida (strain GB-1), this protein is Formamidopyrimidine-DNA glycosylase.